The following is a 388-amino-acid chain: Succinate--CoA ligase [ADP-forming] subunit beta (388 aa).

An ATP-grasp domain is found at 9 to 244 (KSLFAEYGLP…PSQDDAREAH (236 aa)). Residues lysine 46, 53 to 55 (GRG), glutamate 99, threonine 102, and glutamate 107 contribute to the ATP site. Residues asparagine 199 and aspartate 213 each contribute to the Mg(2+) site. Residues asparagine 264 and 321–323 (GIV) contribute to the substrate site.

The protein belongs to the succinate/malate CoA ligase beta subunit family. Heterotetramer of two alpha and two beta subunits. The cofactor is Mg(2+).

It catalyses the reaction succinate + ATP + CoA = succinyl-CoA + ADP + phosphate. It carries out the reaction GTP + succinate + CoA = succinyl-CoA + GDP + phosphate. The protein operates within carbohydrate metabolism; tricarboxylic acid cycle; succinate from succinyl-CoA (ligase route): step 1/1. Succinyl-CoA synthetase functions in the citric acid cycle (TCA), coupling the hydrolysis of succinyl-CoA to the synthesis of either ATP or GTP and thus represents the only step of substrate-level phosphorylation in the TCA. The beta subunit provides nucleotide specificity of the enzyme and binds the substrate succinate, while the binding sites for coenzyme A and phosphate are found in the alpha subunit. This Shewanella sp. (strain ANA-3) protein is Succinate--CoA ligase [ADP-forming] subunit beta.